Reading from the N-terminus, the 427-residue chain is Serine--tRNA ligase (427 aa).

231–233 provides a ligand contact to L-serine; it reads TAE. 262 to 264 lines the ATP pocket; that stretch reads RSE. Glu285 provides a ligand contact to L-serine. Residue 349 to 352 participates in ATP binding; the sequence is EISS. Position 385 (Ser385) interacts with L-serine.

This sequence belongs to the class-II aminoacyl-tRNA synthetase family. Type-1 seryl-tRNA synthetase subfamily. Homodimer. The tRNA molecule binds across the dimer.

It is found in the cytoplasm. The enzyme catalyses tRNA(Ser) + L-serine + ATP = L-seryl-tRNA(Ser) + AMP + diphosphate + H(+). It catalyses the reaction tRNA(Sec) + L-serine + ATP = L-seryl-tRNA(Sec) + AMP + diphosphate + H(+). It functions in the pathway aminoacyl-tRNA biosynthesis; selenocysteinyl-tRNA(Sec) biosynthesis; L-seryl-tRNA(Sec) from L-serine and tRNA(Sec): step 1/1. Its function is as follows. Catalyzes the attachment of serine to tRNA(Ser). Is also able to aminoacylate tRNA(Sec) with serine, to form the misacylated tRNA L-seryl-tRNA(Sec), which will be further converted into selenocysteinyl-tRNA(Sec). The protein is Serine--tRNA ligase of Hahella chejuensis (strain KCTC 2396).